A 259-amino-acid chain; its full sequence is MEIFKVIFLGIIQGLTEFLPISSSGHLVLFQELLGINTDQITLDVFLHFGTVIPVLIIFWDDVRDIIFFKKEKRWLTILILVGIIPTGIIGILFEDFFANLFSSVKTVGFMLLVTGFLLYLSEKLSNYNKELKEMQYHNALIVGVAQGMAIIPGISRSGSTIVASLLQGFDRDAAARYSFLLSAPVIFGAGLVELKDALSTGLEQLTWLSIIIGTIFAALSGYFAIKYLLYILRKGKLTVFAYYCWIVGIMIIILAGIF.

7 helical membrane passes run methionine 1–isoleucine 21, glutamine 40–tryptophan 60, tryptophan 75–glutamate 95, leucine 101–leucine 121, serine 179–leucine 199, leucine 206–isoleucine 226, and threonine 239–phenylalanine 259.

It belongs to the UppP family.

The protein resides in the cell inner membrane. The catalysed reaction is di-trans,octa-cis-undecaprenyl diphosphate + H2O = di-trans,octa-cis-undecaprenyl phosphate + phosphate + H(+). In terms of biological role, catalyzes the dephosphorylation of undecaprenyl diphosphate (UPP). Confers resistance to bacitracin. This Halothermothrix orenii (strain H 168 / OCM 544 / DSM 9562) protein is Undecaprenyl-diphosphatase.